We begin with the raw amino-acid sequence, 743 residues long: Phosphoribosylformylglycinamidine synthase subunit PurL (743 aa).

His-50 is a catalytic residue. ATP-binding residues include Tyr-53 and Lys-92. Mg(2+) is bound at residue Glu-94. Substrate is bound by residues Ser-95–His-98 and Arg-117. His-96 functions as the Proton acceptor in the catalytic mechanism. Residue Asp-118 participates in Mg(2+) binding. Gln-241 is a binding site for substrate. A Mg(2+)-binding site is contributed by Asp-269. Substrate is bound at residue Glu-313–Gln-315. Residues Asp-494 and Gly-531 each coordinate ATP. Asn-532 is a Mg(2+) binding site. Ser-534 contacts substrate.

This sequence belongs to the FGAMS family. Monomer. Part of the FGAM synthase complex composed of 1 PurL, 1 PurQ and 2 PurS subunits.

It localises to the cytoplasm. It carries out the reaction N(2)-formyl-N(1)-(5-phospho-beta-D-ribosyl)glycinamide + L-glutamine + ATP + H2O = 2-formamido-N(1)-(5-O-phospho-beta-D-ribosyl)acetamidine + L-glutamate + ADP + phosphate + H(+). Its pathway is purine metabolism; IMP biosynthesis via de novo pathway; 5-amino-1-(5-phospho-D-ribosyl)imidazole from N(2)-formyl-N(1)-(5-phospho-D-ribosyl)glycinamide: step 1/2. Part of the phosphoribosylformylglycinamidine synthase complex involved in the purines biosynthetic pathway. Catalyzes the ATP-dependent conversion of formylglycinamide ribonucleotide (FGAR) and glutamine to yield formylglycinamidine ribonucleotide (FGAM) and glutamate. The FGAM synthase complex is composed of three subunits. PurQ produces an ammonia molecule by converting glutamine to glutamate. PurL transfers the ammonia molecule to FGAR to form FGAM in an ATP-dependent manner. PurS interacts with PurQ and PurL and is thought to assist in the transfer of the ammonia molecule from PurQ to PurL. The protein is Phosphoribosylformylglycinamidine synthase subunit PurL of Rhizobium meliloti (strain 1021) (Ensifer meliloti).